The chain runs to 515 residues: Bifunctional purine biosynthesis protein PurH (515 aa).

An MGS-like domain is found at 1-144 (MGRKALISVS…KNHKFVTIIV (144 aa)).

Belongs to the PurH family.

It carries out the reaction (6R)-10-formyltetrahydrofolate + 5-amino-1-(5-phospho-beta-D-ribosyl)imidazole-4-carboxamide = 5-formamido-1-(5-phospho-D-ribosyl)imidazole-4-carboxamide + (6S)-5,6,7,8-tetrahydrofolate. The catalysed reaction is IMP + H2O = 5-formamido-1-(5-phospho-D-ribosyl)imidazole-4-carboxamide. Its pathway is purine metabolism; IMP biosynthesis via de novo pathway; 5-formamido-1-(5-phospho-D-ribosyl)imidazole-4-carboxamide from 5-amino-1-(5-phospho-D-ribosyl)imidazole-4-carboxamide (10-formyl THF route): step 1/1. It functions in the pathway purine metabolism; IMP biosynthesis via de novo pathway; IMP from 5-formamido-1-(5-phospho-D-ribosyl)imidazole-4-carboxamide: step 1/1. In Persephonella marina (strain DSM 14350 / EX-H1), this protein is Bifunctional purine biosynthesis protein PurH.